The chain runs to 362 residues: UDP-N-acetylglucosamine--N-acetylmuramyl-(pentapeptide) pyrophosphoryl-undecaprenol N-acetylglucosamine transferase (362 aa).

UDP-N-acetyl-alpha-D-glucosamine contacts are provided by residues 14–16 (TGG), Asn-122, Arg-163, Ser-190, and Gln-285.

Belongs to the glycosyltransferase 28 family. MurG subfamily.

It localises to the cell inner membrane. The enzyme catalyses di-trans,octa-cis-undecaprenyl diphospho-N-acetyl-alpha-D-muramoyl-L-alanyl-D-glutamyl-meso-2,6-diaminopimeloyl-D-alanyl-D-alanine + UDP-N-acetyl-alpha-D-glucosamine = di-trans,octa-cis-undecaprenyl diphospho-[N-acetyl-alpha-D-glucosaminyl-(1-&gt;4)]-N-acetyl-alpha-D-muramoyl-L-alanyl-D-glutamyl-meso-2,6-diaminopimeloyl-D-alanyl-D-alanine + UDP + H(+). The protein operates within cell wall biogenesis; peptidoglycan biosynthesis. Its function is as follows. Cell wall formation. Catalyzes the transfer of a GlcNAc subunit on undecaprenyl-pyrophosphoryl-MurNAc-pentapeptide (lipid intermediate I) to form undecaprenyl-pyrophosphoryl-MurNAc-(pentapeptide)GlcNAc (lipid intermediate II). In Prochlorococcus marinus (strain MIT 9215), this protein is UDP-N-acetylglucosamine--N-acetylmuramyl-(pentapeptide) pyrophosphoryl-undecaprenol N-acetylglucosamine transferase.